Consider the following 134-residue polypeptide: Profilin-1 (134 aa).

Residues C13 and C118 are joined by a disulfide bond. The Involved in PIP2 interaction signature appears at 84 to 100 (AVIRGKKGSGGITIKKT). A Phosphothreonine modification is found at T114.

The protein belongs to the profilin family. As to quaternary structure, occurs in many kinds of cells as a complex with monomeric actin in a 1:1 ratio. In terms of processing, phosphorylated by MAP kinases.

Its subcellular location is the cytoplasm. The protein localises to the cytoskeleton. In terms of biological role, binds to actin and affects the structure of the cytoskeleton. At high concentrations, profilin prevents the polymerization of actin, whereas it enhances it at low concentrations. The chain is Profilin-1 from Olea europaea (Common olive).